A 153-amino-acid polypeptide reads, in one-letter code: MTDQIEIFTDGACSGNPGPGGWGAILRSGAHEKEIWGGEPHTTNNRMELLAVIRALELLKRPVVARVHTDSQYVQKGISEWIHGWKARGWKTAAKAPVKNEDLWRALDEAASRHQVQWVWVRGHAGHVENERADELARRGVDAVRRQGAAVAG.

The 142-residue stretch at 1 to 142 (MTDQIEIFTD…ADELARRGVD (142 aa)) folds into the RNase H type-1 domain. Mg(2+) contacts are provided by Asp10, Glu48, Asp70, and Asp134.

It belongs to the RNase H family. Monomer. It depends on Mg(2+) as a cofactor.

It localises to the cytoplasm. It catalyses the reaction Endonucleolytic cleavage to 5'-phosphomonoester.. Functionally, endonuclease that specifically degrades the RNA of RNA-DNA hybrids. This chain is Ribonuclease H, found in Aromatoleum aromaticum (strain DSM 19018 / LMG 30748 / EbN1) (Azoarcus sp. (strain EbN1)).